Here is a 114-residue protein sequence, read N- to C-terminus: Fumarate reductase subunit D (114 aa).

3 helical membrane-spanning segments follow: residues Ile24–Ile44, Gly49–Phe69, and Leu94–Ile114.

This sequence belongs to the FrdD family. As to quaternary structure, part of an enzyme complex containing four subunits: a flavoprotein (FrdA), an iron-sulfur protein (FrdB), and two hydrophobic anchor proteins (FrdC and FrdD).

It localises to the cell inner membrane. Its function is as follows. Anchors the catalytic components of the fumarate reductase complex to the cell membrane, binds quinones. The chain is Fumarate reductase subunit D from Actinobacillus succinogenes (strain ATCC 55618 / DSM 22257 / CCUG 43843 / 130Z).